Consider the following 542-residue polypeptide: Carboxypeptidase Y (542 aa).

Positions 1 to 21 (MKLSKSTLIATLALTATSTNA) are cleaved as a signal peptide. Positions 22 to 127 (LVVQNPFSNI…DAQVPNHKLR (106 aa)) are excised as a propeptide. Cystine bridges form between C182–C421, C316–C330, C340–C363, C347–C356, and C385–C391. The N-linked (GlcNAc...) asparagine glycan is linked to N213. S269 is a catalytic residue. The N-linked (GlcNAc...) asparagine glycan is linked to N291. The active site involves D461. C464 contributes to the substrate binding site. Residue H518 is part of the active site. Position 519 (M519) interacts with substrate.

It belongs to the peptidase S10 family.

It is found in the vacuole. It carries out the reaction Release of a C-terminal amino acid with broad specificity.. Its function is as follows. Involved in degradation of small peptides. The sequence is that of Carboxypeptidase Y (CPY1) from Candida albicans (Yeast).